The primary structure comprises 622 residues: Low affinity potassium transport system protein Kup (622 aa).

12 helical membrane-spanning segments follow: residues Leu-9–Leu-29, Pro-46–Val-66, Ile-101–Pro-121, Pro-137–Ile-157, Val-165–Leu-185, Val-213–Ala-233, Trp-247–Leu-267, Pro-276–Ala-296, Ile-337–Phe-357, Leu-363–Cys-383, Phe-395–Asn-415, and Val-416–Ile-436.

It belongs to the HAK/KUP transporter (TC 2.A.72) family.

It is found in the cell inner membrane. The catalysed reaction is K(+)(in) + H(+)(in) = K(+)(out) + H(+)(out). Functionally, responsible for the low-affinity transport of potassium into the cell. Likely operates as a K(+):H(+) symporter. This Yersinia pestis bv. Antiqua (strain Antiqua) protein is Low affinity potassium transport system protein Kup.